A 105-amino-acid polypeptide reads, in one-letter code: Heat shock protein HspQ (105 aa).

The protein belongs to the HspQ family.

The protein localises to the cytoplasm. In terms of biological role, involved in the degradation of certain denaturated proteins, including DnaA, during heat shock stress. The sequence is that of Heat shock protein HspQ from Blochmanniella floridana.